A 287-amino-acid polypeptide reads, in one-letter code: Arylamine N-acetyltransferase, liver isozyme (287 aa).

C68 (acyl-thioester intermediate) is an active-site residue. Residues H107 and D122 contribute to the active site.

This sequence belongs to the arylamine N-acetyltransferase family.

The enzyme catalyses an arylamine + acetyl-CoA = an N-acetylarylamine + CoA. The polypeptide is Arylamine N-acetyltransferase, liver isozyme (Gallus gallus (Chicken)).